The chain runs to 451 residues: uncharacterized protein (451 aa).

5 helical membrane-spanning segments follow: residues 11–31 (VLLK…YIDL), 56–76 (IQIY…SIGT), 151–171 (IIGI…NIYL), 175–195 (FWLI…LIIF), and 207–227 (VYSV…TIKI). A disordered region spans residues 250–300 (TKSNNNNNNNNNNKQDDNIIYDTDSSFNGQSSSSSSSSSSSSSSSSSATTT). Low complexity-rich tracts occupy residues 253–262 (NNNNNNNNNN) and 280–300 (SSSS…ATTT). 2 helical membrane passes run 392–412 (FVGV…SDYS) and 413–433 (LLTI…LTYL).

It is found in the membrane. This is an uncharacterized protein from Dictyostelium discoideum (Social amoeba).